A 365-amino-acid chain; its full sequence is Alanine racemase (365 aa).

The active-site Proton acceptor; specific for D-alanine is the lysine 36. Lysine 36 carries the N6-(pyridoxal phosphate)lysine modification. A substrate-binding site is contributed by arginine 132. Catalysis depends on tyrosine 257, which acts as the Proton acceptor; specific for L-alanine. Methionine 305 is a substrate binding site.

This sequence belongs to the alanine racemase family. Pyridoxal 5'-phosphate is required as a cofactor.

It catalyses the reaction L-alanine = D-alanine. It functions in the pathway amino-acid biosynthesis; D-alanine biosynthesis; D-alanine from L-alanine: step 1/1. In terms of biological role, catalyzes the interconversion of L-alanine and D-alanine. May also act on other amino acids. The polypeptide is Alanine racemase (alr) (Xylella fastidiosa (strain Temecula1 / ATCC 700964)).